A 389-amino-acid chain; its full sequence is Diaminopimelate decarboxylase (389 aa).

Lysine 58 is modified (N6-(pyridoxal phosphate)lysine). Residues glycine 233 and 271–274 (ELGR) contribute to the pyridoxal 5'-phosphate site. Residues arginine 274, arginine 310, tyrosine 314, glutamate 342, and tyrosine 370 each coordinate substrate. Residue tyrosine 370 participates in pyridoxal 5'-phosphate binding.

The protein belongs to the Orn/Lys/Arg decarboxylase class-II family. LysA subfamily. As to quaternary structure, homodimer. Pyridoxal 5'-phosphate serves as cofactor.

It carries out the reaction meso-2,6-diaminopimelate + H(+) = L-lysine + CO2. The protein operates within amino-acid biosynthesis; L-lysine biosynthesis via DAP pathway; L-lysine from DL-2,6-diaminopimelate: step 1/1. Functionally, specifically catalyzes the decarboxylation of meso-diaminopimelate (meso-DAP) to L-lysine. The sequence is that of Diaminopimelate decarboxylase from Francisella tularensis subsp. holarctica (strain LVS).